A 146-amino-acid polypeptide reads, in one-letter code: Hemoglobin subunit beta (146 aa).

Threonine 1 is subject to Blocked amino end (Thr). In terms of domain architecture, Globin spans histidine 2–histidine 146. Histidine 63 and histidine 92 together coordinate heme b.

It belongs to the globin family. In terms of assembly, heterotetramer of two alpha chains and two beta chains. Red blood cells.

Its function is as follows. Involved in oxygen transport from the lung to the various peripheral tissues. The polypeptide is Hemoglobin subunit beta (HBB) (Caretta caretta (Loggerhead sea turtle)).